The chain runs to 170 residues: MAPKKAKRRAAAEGGSSSVFSMFDQTQIQEFKEAFTVIDQNRDGIIDKEDLRDTFAAMGRLNVKNEELDAMMKEASGPINFTVFLNMFGEKLKGADPEDVITGAFKVLDPEGKGTIKKKFLEELLTTQCDRFSQEEIKNMWAAFPPDVGGNVDYKNICYVITHGDAKDQE.

Ala2 is modified (n,N,N-trimethylalanine). Ser16 and Ser17 each carry phosphoserine. Residues Thr26 and Thr36 each carry the phosphothreonine modification. Residues 26–61 (TQIQEFKEAFTVIDQNRDGIIDKEDLRDTFAAMGRL) form the EF-hand 1 domain. 4 residues coordinate Ca(2+): Asp39, Asn41, Asp43, and Asp50. Residue Ser76 is modified to Phosphoserine. EF-hand domains are found at residues 96 to 131 (DPEDVITGAFKVLDPEGKGTIKKKFLEELLTTQCDR) and 132 to 167 (FSQEEIKNMWAAFPPDVGGNVDYKNICYVITHGDAK). At Thr102 the chain carries Phosphothreonine.

As to quaternary structure, myosin is a hexamer of 2 heavy chains and 4 light chains.

Its function is as follows. Plays a role in muscle contraction. The protein is Myosin regulatory light chain 2, skeletal muscle isoform of Bos taurus (Bovine).